Here is a 214-residue protein sequence, read N- to C-terminus: Large ribosomal subunit protein bL25 (214 aa).

Residues 178 to 214 (VEPEEEELPETDEEGEGAEGEAAEAAEGESAEGESEE) are disordered. Positions 179–214 (EPEEEELPETDEEGEGAEGEAAEAAEGESAEGESEE) are enriched in acidic residues.

The protein belongs to the bacterial ribosomal protein bL25 family. CTC subfamily. In terms of assembly, part of the 50S ribosomal subunit; part of the 5S rRNA/L5/L18/L25 subcomplex. Contacts the 5S rRNA. Binds to the 5S rRNA independently of L5 and L18.

Functionally, this is one of the proteins that binds to the 5S RNA in the ribosome where it forms part of the central protuberance. In Corynebacterium jeikeium (strain K411), this protein is Large ribosomal subunit protein bL25.